The sequence spans 212 residues: Thymidylate kinase (212 aa).

G9 to T16 serves as a coordination point for ATP.

This sequence belongs to the thymidylate kinase family.

The catalysed reaction is dTMP + ATP = dTDP + ADP. Its function is as follows. Phosphorylation of dTMP to form dTDP in both de novo and salvage pathways of dTTP synthesis. In Synechococcus sp. (strain CC9311), this protein is Thymidylate kinase.